The chain runs to 763 residues: Xaa-Pro dipeptidyl-peptidase (763 aa).

Catalysis depends on charge relay system residues Ser348, Asp468, and His498.

This sequence belongs to the peptidase S15 family. As to quaternary structure, homodimer.

It localises to the cytoplasm. The enzyme catalyses Hydrolyzes Xaa-Pro-|- bonds to release unblocked, N-terminal dipeptides from substrates including Ala-Pro-|-p-nitroanilide and (sequentially) Tyr-Pro-|-Phe-Pro-|-Gly-Pro-|-Ile.. Functionally, removes N-terminal dipeptides sequentially from polypeptides having unsubstituted N-termini provided that the penultimate residue is proline. This chain is Xaa-Pro dipeptidyl-peptidase (pepX), found in Lactococcus lactis subsp. cremoris (Streptococcus cremoris).